Reading from the N-terminus, the 547-residue chain is Chaperonin GroEL (547 aa).

ATP-binding positions include 30 to 33 (TLGP), Lys-51, 87 to 91 (DGTTT), Gly-415, 479 to 481 (NAA), and Asp-495. Positions 524-547 (APKKDEPTPPAAGGGMGGMGGMDF) are disordered. The segment covering 535-547 (AGGGMGGMGGMDF) has biased composition (gly residues).

Belongs to the chaperonin (HSP60) family. As to quaternary structure, forms a cylinder of 14 subunits composed of two heptameric rings stacked back-to-back. Interacts with the co-chaperonin GroES.

Its subcellular location is the cytoplasm. The catalysed reaction is ATP + H2O + a folded polypeptide = ADP + phosphate + an unfolded polypeptide.. In terms of biological role, together with its co-chaperonin GroES, plays an essential role in assisting protein folding. The GroEL-GroES system forms a nano-cage that allows encapsulation of the non-native substrate proteins and provides a physical environment optimized to promote and accelerate protein folding. The protein is Chaperonin GroEL of Xylella fastidiosa (strain 9a5c).